The chain runs to 505 residues: Apolipoprotein N-acyltransferase (505 aa).

A run of 6 helical transmembrane segments spans residues 26–46 (FAPY…LILL), 66–86 (FATG…MPLI), 89–109 (LFLM…FAWL), 129–149 (LWLI…WLWL), 161–181 (FAPI…AGAL), and 186–206 (IHKQ…GFGI). In terms of domain architecture, CN hydrolase spans 225 to 471 (IQGNVDQNLK…TAVLRAELTP (247 aa)). The Proton acceptor role is filled by E264. K330 is a catalytic residue. C382 (nucleophile) is an active-site residue. Residues 481 to 501 (FGTWPLYFWVALSLMLAWWLP) traverse the membrane as a helical segment.

The protein belongs to the CN hydrolase family. Apolipoprotein N-acyltransferase subfamily.

The protein localises to the cell inner membrane. It catalyses the reaction N-terminal S-1,2-diacyl-sn-glyceryl-L-cysteinyl-[lipoprotein] + a glycerophospholipid = N-acyl-S-1,2-diacyl-sn-glyceryl-L-cysteinyl-[lipoprotein] + a 2-acyl-sn-glycero-3-phospholipid + H(+). The protein operates within protein modification; lipoprotein biosynthesis (N-acyl transfer). In terms of biological role, catalyzes the phospholipid dependent N-acylation of the N-terminal cysteine of apolipoprotein, the last step in lipoprotein maturation. The protein is Apolipoprotein N-acyltransferase of Vibrio parahaemolyticus serotype O3:K6 (strain RIMD 2210633).